The sequence spans 292 residues: Norajmaline N-methyltransferase (292 aa).

Residues 71–80 (KNMLDIGCGV) form an SAM motif I region. The tract at residues 134-142 (KDGTFDLVL) is SAM motif II. A Vacuolar targeting signal motif is present at residues 135-141 (DGTFDLV). The tract at residues 161 to 170 (IRVAAPGAPI) is SAM motif III.

Belongs to the class I-like SAM-binding methyltransferase superfamily. gTMT family. In terms of assembly, homodimer. As to expression, mainly expressed in mature roots and, to a lesser extent, in leaves, stems and flowers.

The protein localises to the vacuole membrane. It carries out the reaction norajmaline + S-adenosyl-L-methionine = ajmaline + S-adenosyl-L-homocysteine + H(+). It catalyses the reaction 4-methylnorajmaline + S-adenosyl-L-methionine = 4-methylajmaline + S-adenosyl-L-homocysteine + H(+). It participates in alkaloid biosynthesis; ajmaline biosynthesis. Its function is as follows. N-methyltransferase involved in the biosynthesis of ajmaline-type monoterpenoid indole alkaloids (MIAs) natural products, important plant-derived pharmaceuticals used in the therapy of heart disorders. Catalyzes the indole N-methylation of norajmaline to produce ajmaline. Also able, with a lower efficiency, to mediates the conversion of 4-methylnorajmaline to 4-methylajmaline. The sequence is that of Norajmaline N-methyltransferase from Rauvolfia serpentina (Serpentine wood).